The sequence spans 207 residues: 3-hexulose-6-phosphate synthase (207 aa).

Belongs to the HPS/KGPDC family. HPS subfamily.

The enzyme catalyses D-ribulose 5-phosphate + formaldehyde = D-arabino-hex-3-ulose 6-phosphate. The protein operates within one-carbon metabolism; formaldehyde assimilation via RuMP pathway; D-fructose 6-phosphate from D-ribulose 5-phosphate and formaldehyde: step 1/2. Functionally, catalyzes the condensation of ribulose 5-phosphate with formaldehyde to form 3-hexulose 6-phosphate. The protein is 3-hexulose-6-phosphate synthase (rmpA) of Mycobacterium gastri.